A 480-amino-acid polypeptide reads, in one-letter code: MATARVMVADRARAFGGTTATRARRDDQGRRVTIARGIPSRARVVVARASERAYAELGNVCAVLGSQWGDEGKGKLVDILAREYDVVARCQGGANAGHTIYDDNGKKYALHLVPSGILNENATCVVGNGVVVHLPGMFEEIDKLLQAGVDARGRMIVSDRAHLLFDLHKEIDGLREEELSGNKIGTTKRGIGPAYASKATRNGVRLGDIRDEERFATMLRALAADAAARFEGFQYDVEAEIVRYKEIAERIEPFIADTVEYINEAHDSGKKILVEGANATMLDLDFGTYPFVTSSNPALGGVCNGLGLAPRKFKTIIGVAKAYTTRVGAGPYPTELFGDVADKLRELGYEYGTTTGRPRRIGWLDMVALNYANLINGFTHLNITKLDVLSEMDELKIGVAYKLPNGKTTKSFPADIATLEKVETVYETLPGWKEDISKVRTWDDLPENAKKYVLRVEELAGVECKFIGVGPGRDAMVIKP.

The transit peptide at 1 to 54 directs the protein to the chloroplast; sequence MATARVMVADRARAFGGTTATRARRDDQGRRVTIARGIPSRARVVVARASERAY. Residues 69–75 and 97–99 contribute to the GTP site; these read GDEGKGK and GHT. Catalysis depends on aspartate 70, which acts as the Proton acceptor. Residues aspartate 70 and glycine 97 each contribute to the Mg(2+) site. IMP contacts are provided by residues 70 to 73, 95 to 98, threonine 187, arginine 201, asparagine 278, threonine 293, and arginine 357; these read DEGK and NAGH. Histidine 98 serves as the catalytic Proton donor. 353 to 359 contributes to the substrate binding site; sequence TTTGRPR. GTP is bound by residues arginine 359, 385–387, and 468–470; these read KLD and GVG.

It belongs to the adenylosuccinate synthetase family. In terms of assembly, homodimer. It depends on Mg(2+) as a cofactor.

The protein localises to the plastid. Its subcellular location is the chloroplast. It catalyses the reaction IMP + L-aspartate + GTP = N(6)-(1,2-dicarboxyethyl)-AMP + GDP + phosphate + 2 H(+). It participates in purine metabolism; AMP biosynthesis via de novo pathway; AMP from IMP: step 1/2. Functionally, plays an important role in the de novo pathway and in the salvage pathway of purine nucleotide biosynthesis. Catalyzes the first committed step in the biosynthesis of AMP from IMP. This chain is Adenylosuccinate synthetase, chloroplastic, found in Ostreococcus tauri.